The sequence spans 145 residues: 3-hydroxyacyl-[acyl-carrier-protein] dehydratase FabZ (145 aa).

Residue His48 is part of the active site.

The protein belongs to the thioester dehydratase family. FabZ subfamily.

It is found in the cytoplasm. The enzyme catalyses a (3R)-hydroxyacyl-[ACP] = a (2E)-enoyl-[ACP] + H2O. Its function is as follows. Involved in unsaturated fatty acids biosynthesis. Catalyzes the dehydration of short chain beta-hydroxyacyl-ACPs and long chain saturated and unsaturated beta-hydroxyacyl-ACPs. This Cellvibrio japonicus (strain Ueda107) (Pseudomonas fluorescens subsp. cellulosa) protein is 3-hydroxyacyl-[acyl-carrier-protein] dehydratase FabZ.